The chain runs to 257 residues: Hydroxyacylglutathione hydrolase (257 aa).

His54, His56, Asp58, His59, His113, Asp137, and His175 together coordinate Zn(2+).

It belongs to the metallo-beta-lactamase superfamily. Glyoxalase II family. In terms of assembly, monomer. Zn(2+) is required as a cofactor.

The catalysed reaction is an S-(2-hydroxyacyl)glutathione + H2O = a 2-hydroxy carboxylate + glutathione + H(+). It functions in the pathway secondary metabolite metabolism; methylglyoxal degradation; (R)-lactate from methylglyoxal: step 2/2. Thiolesterase that catalyzes the hydrolysis of S-D-lactoyl-glutathione to form glutathione and D-lactic acid. This is Hydroxyacylglutathione hydrolase from Nostoc sp. (strain PCC 7120 / SAG 25.82 / UTEX 2576).